We begin with the raw amino-acid sequence, 374 residues long: tRNA (guanine(26)-N(2))-dimethyltransferase (374 aa).

The Trm1 methyltransferase domain occupies 4–368 (IEATEGTTTF…APLPVLYDAI (365 aa)). Residues Arg41, Arg66, Asp82, Asp108, and Ala109 each contribute to the S-adenosyl-L-methionine site. Cys237, Cys240, Cys256, and Cys259 together coordinate Zn(2+).

Belongs to the class I-like SAM-binding methyltransferase superfamily. Trm1 family.

It catalyses the reaction guanosine(26) in tRNA + 2 S-adenosyl-L-methionine = N(2)-dimethylguanosine(26) in tRNA + 2 S-adenosyl-L-homocysteine + 2 H(+). Its function is as follows. Dimethylates a single guanine residue at position 26 of a number of tRNAs using S-adenosyl-L-methionine as donor of the methyl groups. This is tRNA (guanine(26)-N(2))-dimethyltransferase from Methanoregula boonei (strain DSM 21154 / JCM 14090 / 6A8).